The chain runs to 341 residues: NADH-ubiquinone oxidoreductase chain 2 (341 aa).

The next 9 membrane-spanning stretches (helical) occupy residues 8-28 (IFLI…SWLG), 61-81 (FLTQ…LMFL), 95-115 (ILIL…FWFP), 145-165 (FIYN…SLGG), 174-191 (LMAF…LAMM), 195-215 (MLWM…VLMF), 238-258 (LLIF…GFLP), 272-292 (LFIL…YLRL), and 321-341 (LIFN…YIIM).

This sequence belongs to the complex I subunit 2 family.

It localises to the mitochondrion inner membrane. It catalyses the reaction a ubiquinone + NADH + 5 H(+)(in) = a ubiquinol + NAD(+) + 4 H(+)(out). Core subunit of the mitochondrial membrane respiratory chain NADH dehydrogenase (Complex I) that is believed to belong to the minimal assembly required for catalysis. Complex I functions in the transfer of electrons from NADH to the respiratory chain. The immediate electron acceptor for the enzyme is believed to be ubiquinone. The chain is NADH-ubiquinone oxidoreductase chain 2 (mt:ND2) from Anopheles gambiae (African malaria mosquito).